The following is a 723-amino-acid chain: LPS-assembly protein LptD (723 aa).

Residues 1–23 (MNTLKLCLILYACLVLLPVRVMS) form the signal peptide.

This sequence belongs to the LptD family. As to quaternary structure, component of the lipopolysaccharide transport and assembly complex. Interacts with LptE and LptA.

The protein resides in the cell outer membrane. Its function is as follows. Together with LptE, is involved in the assembly of lipopolysaccharide (LPS) at the surface of the outer membrane. The sequence is that of LPS-assembly protein LptD from Nitrosomonas europaea (strain ATCC 19718 / CIP 103999 / KCTC 2705 / NBRC 14298).